The primary structure comprises 627 residues: uncharacterized protein (627 aa).

The span at 1-20 shows a compositional bias: basic and acidic residues; it reads MAKFKKDLTTKNKDTDRLSE. Disordered regions lie at residues 1 to 22 and 578 to 606; these read MAKFKKDLTTKNKDTDRLSEEI and LSLGSEEEQGQEETEASIQNAGDKKLLPV. Acidic residues predominate over residues 582-592; that stretch reads SEEEQGQEETE.

This is an uncharacterized protein from Rickettsia prowazekii (strain Madrid E).